The following is a 524-amino-acid chain: AAA ATPase forming ring-shaped complexes (524 aa).

Positions 1–29 are disordered; that stretch reads MGMGQEKHTDAASQSRDPEAVAAHENDQL. The stretch at 22–59 forms a coiled coil; that stretch reads AAHENDQLRQRNHALAKALTRATEELRKAKAQLEQFMA. Residue 250-255 participates in ATP binding; the sequence is GNGKTL.

This sequence belongs to the AAA ATPase family. As to quaternary structure, homohexamer. Assembles into a hexameric ring structure.

In Bifidobacterium animalis subsp. lactis (strain BB-12), this protein is AAA ATPase forming ring-shaped complexes.